The primary structure comprises 1529 residues: DNA (cytosine-5)-methyltransferase 1B (1529 aa).

Disordered stretches follow at residues 1–56 and 674–706; these read MVKS…RAAC and DDELEENEDEDAEEEAQIEEENVSKTPPSTRSR. The span at 21-35 shows a compositional bias: basic and acidic residues; sequence QKKDEDTTDKGKLDE. Over residues 674 to 694 the composition is skewed to acidic residues; sequence DDELEENEDEDAEEEAQIEEE. Over residues 697–706 the composition is skewed to polar residues; sequence SKTPPSTRSR. 2 consecutive BAH domains span residues 741 to 873 and 910 to 1049; these read LRIN…FSLP and ITYN…KQLP. The SAM-dependent MTase C5-type domain occupies 1093–1527; it reads LATLDIFAGC…RKLKEAVDAK (435 aa). Cys-1198 is a catalytic residue.

The protein belongs to the class I-like SAM-binding methyltransferase superfamily. C5-methyltransferase family. As to expression, expressed in roots and inflorescences. Expressed in roots, panicles, anthers, pistils, endosperm and imbibed embryos. Expressed in tissues containing actively replicating and dividing cells, such as shoot and root meristems.

It is found in the nucleus. The catalysed reaction is a 2'-deoxycytidine in DNA + S-adenosyl-L-methionine = a 5-methyl-2'-deoxycytidine in DNA + S-adenosyl-L-homocysteine + H(+). Its function is as follows. Major CG methylase that methylates chromatin CpG residues and maintains DNA methylation. Plays a major role in genomic imprinting, regulation of embryogenesis and seed viability. Maintains DNA methylation at the FIE1 gene locus in the embryo. The protein is DNA (cytosine-5)-methyltransferase 1B (MET1B) of Oryza sativa subsp. japonica (Rice).